We begin with the raw amino-acid sequence, 570 residues long: MSEKHPGPLVVEGKLSDAERMKLESNYLRGTIAEDLNDGLTGGFKGDNFLLIRFHGMYQQDDRDIRAERAAQKLEPRHAMLLRCRLPGGVITTTQWQAIDKFAADNTIYGSIRLTNRQTFQFHGILKKNVKPVHQMLHSVGLDALATANDMNRNVLCTSNPYESQLHAEAYEWAKKISEHLLPRTRAYAEIWLDQEKVATTDEEPILGATYLPRKFKTTVVIPPQNDIDLHANDMNFVAIAENGKLVGFNLLVGGGLSIEHGNKKTYARTASEFGYLPLEHTLAVAEAVVTTQRDWGNRTDRKNAKTKYTLERVGVDTFKEEVERRAGIKFEPIRPYEFTGRGDRIGWVKGIDDKWHLTLFIENGRILDYPGRPLKTGLLEIAKIHQGEFRITANQNLIIASVPESQKAKIETLARDHGLMNAVSAQRENSMACVSFPTCPLAMAEAERFLPSFTDKVEAILEKHGIPDEHIVMRVTGCPNGCGRAMLAEIGLVGKAPGRYNLHLGGNRIGSRIPRMYKENITEPDILASLDELIGRWAKEREAGEGFGDFTVRAGIIRPVLDPARDFWE.

Residues cysteine 434, cysteine 440, cysteine 479, and cysteine 483 each coordinate [4Fe-4S] cluster. Residue cysteine 483 coordinates siroheme.

Belongs to the nitrite and sulfite reductase 4Fe-4S domain family. As to quaternary structure, alpha(8)-beta(8). The alpha component is a flavoprotein, the beta component is a hemoprotein. Siroheme is required as a cofactor. The cofactor is [4Fe-4S] cluster.

The catalysed reaction is hydrogen sulfide + 3 NADP(+) + 3 H2O = sulfite + 3 NADPH + 4 H(+). The protein operates within sulfur metabolism; hydrogen sulfide biosynthesis; hydrogen sulfide from sulfite (NADPH route): step 1/1. In terms of biological role, component of the sulfite reductase complex that catalyzes the 6-electron reduction of sulfite to sulfide. This is one of several activities required for the biosynthesis of L-cysteine from sulfate. In Salmonella newport (strain SL254), this protein is Sulfite reductase [NADPH] hemoprotein beta-component.